The following is a 353-amino-acid chain: Feruloyl esterase B (353 aa).

The first 18 residues, 1 to 18, serve as a signal peptide directing secretion; sequence MAIPLVLVLAWLLPVVLA. Positions 19–291 are catalytic; that stretch reads ASLTQVNNFG…VSVVLDWFGI (273 aa). Ser136 serves as the catalytic Charge relay system. N-linked (GlcNAc...) asparagine glycosylation is found at Asn179 and Asn246. One can recognise a CBM1 domain in the interval 317 to 353; sequence CTAAHWAQCGGIGYSGCTACASPYTCQKANDYYSQCL.

The protein belongs to the carbohydrate esterase 1 (CE1) family. Feruloyl esterase type B subfamily. Glycosylated.

The protein resides in the secreted. The enzyme catalyses feruloyl-polysaccharide + H2O = ferulate + polysaccharide.. Its activity is regulated as follows. Inhibited by the specific serine esterase inhibitor AEBSF. Involved in degradation of plant cell walls. Hydrolyzes the feruloyl-arabinose ester bond in arabinoxylans, and the feruloyl-galactose and feruloyl-arabinose ester bonds in pectin. Binds strongly to cellulose. The polypeptide is Feruloyl esterase B (FAEB) (Talaromyces funiculosus (Fruitlet core rot fungus)).